The sequence spans 459 residues: tRNA modification GTPase MnmE (459 aa).

Arg22, Glu85, and Arg124 together coordinate (6S)-5-formyl-5,6,7,8-tetrahydrofolate. Positions 221–380 constitute a TrmE-type G domain; that stretch reads GLSTVIVGKP…LEIQIRDLFF (160 aa). Residue Asn231 participates in K(+) binding. GTP is bound by residues 231–236, 250–256, and 275–278; these read NVGKSS, TEVAGTT, and DTAG. Ser235 lines the Mg(2+) pocket. K(+) contacts are provided by Thr250, Val252, and Thr255. A Mg(2+)-binding site is contributed by Thr256. Lys459 lines the (6S)-5-formyl-5,6,7,8-tetrahydrofolate pocket.

This sequence belongs to the TRAFAC class TrmE-Era-EngA-EngB-Septin-like GTPase superfamily. TrmE GTPase family. In terms of assembly, homodimer. Heterotetramer of two MnmE and two MnmG subunits. The cofactor is K(+).

It is found in the cytoplasm. Exhibits a very high intrinsic GTPase hydrolysis rate. Involved in the addition of a carboxymethylaminomethyl (cmnm) group at the wobble position (U34) of certain tRNAs, forming tRNA-cmnm(5)s(2)U34. The sequence is that of tRNA modification GTPase MnmE from Staphylococcus aureus (strain bovine RF122 / ET3-1).